A 177-amino-acid polypeptide reads, in one-letter code: Adenylate kinase (177 aa).

Glycine 13 to threonine 18 contributes to the ATP binding site. The segment at serine 33 to alanine 62 is NMP. Residues serine 34, arginine 39, arginine 60 to alanine 62, glycine 85 to arginine 88, and glutamine 92 contribute to the AMP site. Residues glycine 119–aspartate 127 form an LID region. Arginine 120 contributes to the ATP binding site. Arginine 124 and arginine 135 together coordinate AMP.

This sequence belongs to the adenylate kinase family. As to quaternary structure, monomer.

The protein resides in the cytoplasm. It catalyses the reaction AMP + ATP = 2 ADP. In terms of biological role, catalyzes the reversible transfer of the terminal phosphate group between ATP and AMP. Plays an important role in cellular energy homeostasis and in adenine nucleotide metabolism. The chain is Adenylate kinase from Encephalitozoon cuniculi (strain GB-M1) (Microsporidian parasite).